Consider the following 804-residue polypeptide: Elongation factor G, mitochondrial (804 aa).

The transit peptide at 1-9 directs the protein to the mitochondrion; it reads MVRPAQVRA. Residues 103–389 enclose the tr-type G domain; sequence SKVRNIGIAA…GVCDYLPNPS (287 aa). GTP-binding positions include 112–119, 187–191, and 241–244; these read AHIDSGKT, DTPGH, and NKMD.

The protein belongs to the TRAFAC class translation factor GTPase superfamily. Classic translation factor GTPase family. EF-G/EF-2 subfamily.

It localises to the mitochondrion. It functions in the pathway protein biosynthesis; polypeptide chain elongation. Functionally, mitochondrial GTPase that catalyzes the GTP-dependent ribosomal translocation step during translation elongation. During this step, the ribosome changes from the pre-translocational (PRE) to the post-translocational (POST) state as the newly formed A-site-bound peptidyl-tRNA and P-site-bound deacylated tRNA move to the P and E sites, respectively. Catalyzes the coordinated movement of the two tRNA molecules, the mRNA and conformational changes in the ribosome. The polypeptide is Elongation factor G, mitochondrial (mef1) (Talaromyces stipitatus (strain ATCC 10500 / CBS 375.48 / QM 6759 / NRRL 1006) (Penicillium stipitatum)).